The following is a 104-amino-acid chain: Large ribosomal subunit protein uL24 (104 aa).

This sequence belongs to the universal ribosomal protein uL24 family. Part of the 50S ribosomal subunit.

One of two assembly initiator proteins, it binds directly to the 5'-end of the 23S rRNA, where it nucleates assembly of the 50S subunit. In terms of biological role, one of the proteins that surrounds the polypeptide exit tunnel on the outside of the subunit. The chain is Large ribosomal subunit protein uL24 from Pseudomonas syringae pv. syringae (strain B728a).